The following is a 500-amino-acid chain: Maturase K (500 aa).

The protein belongs to the intron maturase 2 family. MatK subfamily.

It is found in the plastid. The protein resides in the chloroplast. Its function is as follows. Usually encoded in the trnK tRNA gene intron. Probably assists in splicing its own and other chloroplast group II introns. This is Maturase K from Fragaria vesca (Woodland strawberry).